The sequence spans 352 residues: Thymidine kinase (352 aa).

32-39 (GVYGIGKS) lines the ATP pocket. The active-site Proton acceptor is Glu-60. Residues Tyr-78, Gln-102, Phe-105, and Phe-148 each coordinate substrate. Arg-192 is an ATP binding site. Arg-198 provides a ligand contact to substrate.

It belongs to the herpesviridae thymidine kinase family. As to quaternary structure, homodimer.

It catalyses the reaction thymidine + ATP = dTMP + ADP + H(+). Catalyzes the transfer of the gamma-phospho group of ATP to thymidine to generate dTMP in the salvage pathway of pyrimidine synthesis. The dTMP serves as a substrate for DNA polymerase during viral DNA replication. Allows the virus to be reactivated and to grow in non-proliferative cells lacking a high concentration of phosphorylated nucleic acid precursors. This Equine herpesvirus 4 (strain 1942) (EHV-4) protein is Thymidine kinase.